Here is a 77-residue protein sequence, read N- to C-terminus: Acyl carrier protein (77 aa).

Residues Met1–Glu76 form the Carrier domain. Residue Ser36 is modified to O-(pantetheine 4'-phosphoryl)serine.

It belongs to the acyl carrier protein (ACP) family. In terms of processing, 4'-phosphopantetheine is transferred from CoA to a specific serine of apo-ACP by AcpS. This modification is essential for activity because fatty acids are bound in thioester linkage to the sulfhydryl of the prosthetic group.

The protein localises to the cytoplasm. It participates in lipid metabolism; fatty acid biosynthesis. Functionally, carrier of the growing fatty acid chain in fatty acid biosynthesis. The sequence is that of Acyl carrier protein from Staphylococcus aureus (strain Mu3 / ATCC 700698).